Reading from the N-terminus, the 657-residue chain is N-acetylgalactosaminyltransferase 7 (657 aa).

Topologically, residues 1–6 (MRLKIG) are cytoplasmic. The helical; Signal-anchor for type II membrane protein transmembrane segment at 7–29 (FILRSLLVVGSFLGLVVLWSSLS) threads the bilayer. Disordered stretches follow at residues 30 to 66 (SRPDDQSPLSRMREDRDVNNPLPNRGGNGLAPGDDRF) and 83 to 105 (ESIRRKNKAKNEQERHAGGDSQR). Topologically, residues 30-657 (SRPDDQSPLS…KWEMNNIHSV (628 aa)) are lumenal. Cystine bridges form between cysteine 197-cysteine 435, cysteine 426-cysteine 507, cysteine 545-cysteine 562, cysteine 585-cysteine 600, and cysteine 625-cysteine 640. The segment at 206-317 (LLTSSVVIVF…VNWYAPLVAP (112 aa)) is catalytic subdomain A. Aspartate 247 and arginine 277 together coordinate substrate. The Mn(2+) site is built by aspartate 301 and histidine 303. The segment at 381-443 (PYRSPAMAGG…PCSRVGHIYR (63 aa)) is catalytic subdomain B. Tryptophan 412 is a substrate binding site. Histidine 440 serves as a coordination point for Mn(2+). Arginine 443 provides a ligand contact to substrate. Positions 532-652 (VEWGEIRGLE…SKMTQKWEMN (121 aa)) constitute a Ricin B-type lectin domain.

This sequence belongs to the glycosyltransferase 2 family. GalNAc-T subfamily. Mn(2+) is required as a cofactor. Highly expressed in sublingual gland. Expressed at lower level in stomach, small intestiine and colon.

The protein localises to the golgi apparatus membrane. It carries out the reaction L-seryl-[protein] + UDP-N-acetyl-alpha-D-galactosamine = a 3-O-[N-acetyl-alpha-D-galactosaminyl]-L-seryl-[protein] + UDP + H(+). The catalysed reaction is L-threonyl-[protein] + UDP-N-acetyl-alpha-D-galactosamine = a 3-O-[N-acetyl-alpha-D-galactosaminyl]-L-threonyl-[protein] + UDP + H(+). Its pathway is protein modification; protein glycosylation. Its function is as follows. Glycopeptide transferase involved in O-linked oligosaccharide biosynthesis, which catalyzes the transfer of an N-acetyl-D-galactosamine residue to an already glycosylated peptide. In contrast to other proteins of the family, it does not act as a peptide transferase that transfers GalNAc onto serine or threonine residue on the protein receptor, but instead requires the prior addition of a GalNAc on a peptide before adding additional GalNAc moieties. Some peptide transferase activity is however not excluded, considering that its appropriate peptide substrate may remain unidentified. This Mus musculus (Mouse) protein is N-acetylgalactosaminyltransferase 7 (Galnt7).